The chain runs to 122 residues: Double-headed protease inhibitor, submandibular gland (122 aa).

2 consecutive Kazal-like domains span residues 10 to 70 and 71 to 121; these read GGRK…ECDI and ECTQ…QCQS. 6 disulfides stabilise this stretch: cysteine 16–cysteine 50, cysteine 28–cysteine 47, cysteine 36–cysteine 68, cysteine 72–cysteine 101, cysteine 79–cysteine 98, and cysteine 87–cysteine 119.

It is found in the secreted. This inhibitor is composed of two homologous actively inhibiting halves: one which inhibits trypsin, the other which inhibits elastase. This chain is Double-headed protease inhibitor, submandibular gland, found in Panthera uncia (Snow leopard).